The sequence spans 609 residues: Glutamine--fructose-6-phosphate aminotransferase [isomerizing] (609 aa).

C2 functions as the Nucleophile; for GATase activity in the catalytic mechanism. In terms of domain architecture, Glutamine amidotransferase type-2 spans 2–218; that stretch reads CGIVGAIAQR…EGDIAEITRR (217 aa). 2 SIS domains span residues 286 to 426 and 458 to 599; these read ADEL…LKGL and LAED…VDQP. K604 functions as the For Fru-6P isomerization activity in the catalytic mechanism.

In terms of assembly, homodimer.

It localises to the cytoplasm. The catalysed reaction is D-fructose 6-phosphate + L-glutamine = D-glucosamine 6-phosphate + L-glutamate. Its function is as follows. Catalyzes the first step in hexosamine metabolism, converting fructose-6P into glucosamine-6P using glutamine as a nitrogen source. The sequence is that of Glutamine--fructose-6-phosphate aminotransferase [isomerizing] from Escherichia coli O6:H1 (strain CFT073 / ATCC 700928 / UPEC).